Consider the following 308-residue polypeptide: Glutaminase (308 aa).

Substrate is bound by residues S66, N117, E161, N168, Y192, Y244, and V262.

The protein belongs to the glutaminase family. As to quaternary structure, homotetramer.

It carries out the reaction L-glutamine + H2O = L-glutamate + NH4(+). This chain is Glutaminase, found in Cronobacter sakazakii (strain ATCC BAA-894) (Enterobacter sakazakii).